We begin with the raw amino-acid sequence, 431 residues long: Ribosomal protein uS12 methylthiotransferase RimO (431 aa).

The MTTase N-terminal domain maps to 4 to 120; the sequence is HKLFLLSLGC…ILAALGAAYH (117 aa). Positions 13, 49, 83, 144, 148, and 151 each coordinate [4Fe-4S] cluster. The Radical SAM core domain occupies 130 to 359; the sequence is LTPPHYTYLK…MELQESVSQD (230 aa). The TRAM domain maps to 362–429; the sequence is RDFEGKEITV…PFDLVGEVIG (68 aa).

It belongs to the methylthiotransferase family. RimO subfamily. It depends on [4Fe-4S] cluster as a cofactor.

It is found in the cytoplasm. The enzyme catalyses L-aspartate(89)-[ribosomal protein uS12]-hydrogen + (sulfur carrier)-SH + AH2 + 2 S-adenosyl-L-methionine = 3-methylsulfanyl-L-aspartate(89)-[ribosomal protein uS12]-hydrogen + (sulfur carrier)-H + 5'-deoxyadenosine + L-methionine + A + S-adenosyl-L-homocysteine + 2 H(+). In terms of biological role, catalyzes the methylthiolation of an aspartic acid residue of ribosomal protein uS12. The protein is Ribosomal protein uS12 methylthiotransferase RimO of Pelodictyon phaeoclathratiforme (strain DSM 5477 / BU-1).